Consider the following 126-residue polypeptide: Holo-[acyl-carrier-protein] synthase (126 aa).

Mg(2+) contacts are provided by Asp8 and Glu59.

It belongs to the P-Pant transferase superfamily. AcpS family. The cofactor is Mg(2+).

Its subcellular location is the cytoplasm. It carries out the reaction apo-[ACP] + CoA = holo-[ACP] + adenosine 3',5'-bisphosphate + H(+). In terms of biological role, transfers the 4'-phosphopantetheine moiety from coenzyme A to a Ser of acyl-carrier-protein. The chain is Holo-[acyl-carrier-protein] synthase from Rickettsia akari (strain Hartford).